A 296-amino-acid polypeptide reads, in one-letter code: Formamidopyrimidine-DNA glycosylase (296 aa).

Catalysis depends on Pro2, which acts as the Schiff-base intermediate with DNA. The active-site Proton donor is Glu3. Residue Lys61 is the Proton donor; for beta-elimination activity of the active site. DNA contacts are provided by His104, Arg123, and Lys169. Residues 255 to 289 (DAYGREGEPCRRCGAIMRRDKFMNRSSFYCPRCQP) form an FPG-type zinc finger. The Proton donor; for delta-elimination activity role is filled by Arg279.

It belongs to the FPG family. As to quaternary structure, monomer. It depends on Zn(2+) as a cofactor.

It catalyses the reaction Hydrolysis of DNA containing ring-opened 7-methylguanine residues, releasing 2,6-diamino-4-hydroxy-5-(N-methyl)formamidopyrimidine.. It carries out the reaction 2'-deoxyribonucleotide-(2'-deoxyribose 5'-phosphate)-2'-deoxyribonucleotide-DNA = a 3'-end 2'-deoxyribonucleotide-(2,3-dehydro-2,3-deoxyribose 5'-phosphate)-DNA + a 5'-end 5'-phospho-2'-deoxyribonucleoside-DNA + H(+). Its function is as follows. Involved in base excision repair of DNA damaged by oxidation or by mutagenic agents. Acts as a DNA glycosylase that recognizes and removes damaged bases. Has a preference for oxidized purines, such as 7,8-dihydro-8-oxoguanine (8-oxoG). Has AP (apurinic/apyrimidinic) lyase activity and introduces nicks in the DNA strand. Cleaves the DNA backbone by beta-delta elimination to generate a single-strand break at the site of the removed base with both 3'- and 5'-phosphates. This is Formamidopyrimidine-DNA glycosylase from Mycobacterium sp. (strain KMS).